A 536-amino-acid chain; its full sequence is SNW domain-containing protein 1 (536 aa).

The interval 1-46 (MALTSFLPAPTQLSQDQLEAEEKARSQRSRQTSLVSSRREPPPYGY) is disordered. N-acetylalanine is present on A2. Position 14 is a phosphoserine (S14). Residue K23 forms a Glycyl lysine isopeptide (Lys-Gly) (interchain with G-Cter in SUMO2) linkage. Residues 59–79 (GDGGAFPEIHVAQYPLDMGRK) are interaction with PPIL1. Glycyl lysine isopeptide (Lys-Gly) (interchain with G-Cter in SUMO2) cross-links involve residues K81, K97, K115, K122, K141, K158, and K170. The tract at residues 174–339 (AQYIRYTPSQ…KARERRAGIK (166 aa)) is SNW. Phosphoserine occurs at positions 182 and 190. K193 participates in a covalent cross-link: Glycyl lysine isopeptide (Lys-Gly) (interchain with G-Cter in SUMO2). Positions 209–234 (PPRFKINKKIPRGPPSPPAPVMHSPS) are disordered. S224, S232, and S234 each carry phosphoserine. Residues K240, K258, K286, K339, K344, K416, and K441 each participate in a glycyl lysine isopeptide (Lys-Gly) (interchain with G-Cter in SUMO2) cross-link. A disordered region spans residues 311–386 (KMAQKEKEKH…RSKLQRNENR (76 aa)). S446 bears the Phosphoserine mark. Residue K452 forms a Glycyl lysine isopeptide (Lys-Gly) (interchain with G-Cter in SUMO2) linkage. Composition is skewed to basic and acidic residues over residues 469-489 (TNRFVPDKEFSGSDRRQRGRE) and 503-530 (KFLEEAKQHGGSKRPSDSSRPKEHEHEG). The disordered stretch occupies residues 469–536 (TNRFVPDKEF…EHEGKKRRKE (68 aa)). Phosphoserine occurs at positions 479 and 481. K509 is covalently cross-linked (Glycyl lysine isopeptide (Lys-Gly) (interchain with G-Cter in SUMO2)).

It belongs to the SNW family. In terms of assembly, identified in the spliceosome C complex. Associates with U4/U6-U5 tri-small nuclear ribonucleoproteins (U4/U6-U5 tri-snRNPs). Component of the minor spliceosome, which splices U12-type introns. Interacts with SKI, SMAD2,SMAD3, RBPJ, RB1, PABPN1, MAGEA1, SIRT1, FOXN3, U2AF2, PPIL1, DAXX and ATP1B4. Interacts with VDR and RXRA; preferentially associates with VDR:RXRA heterodimers. Interacts with NCOR2. Interacts with MAML1. Interacts with NOTCH1 NICD; the interaction involves multimerized NOTCH1 NICD. Forms a complex with NOTCH1 NICD and MAML1; the association is dissociated by RBPJ. Associates with positive transcription elongation factor b (P-TEFb). Component of the SNARP complex which consists at least of SNIP1, SNW1, THRAP3, BCLAF1 and PNN.

It is found in the nucleus. In terms of biological role, involved in pre-mRNA splicing as component of the spliceosome. As a component of the minor spliceosome, involved in the splicing of U12-type introns in pre-mRNAs. Required in the specific splicing of CDKN1A pre-mRNA; the function probably involves the recruitment of U2AF2 to the mRNA. May recruit PPIL1 to the spliceosome. May be involved in cyclin-D1/CCND1 mRNA stability through the SNARP complex which associates with both the 3'end of the CCND1 gene and its mRNA. Involved in transcriptional regulation. Modulates TGF-beta-mediated transcription via association with SMAD proteins, MYOD1-mediated transcription via association with PABPN1, RB1-mediated transcriptional repression, and retinoid-X receptor (RXR)- and vitamin D receptor (VDR)-dependent gene transcription in a cell line-specific manner probably involving coactivators NCOA1 and GRIP1. Is involved in NOTCH1-mediated transcriptional activation. Binds to multimerized forms of Notch intracellular domain (NICD) and is proposed to recruit transcriptional coactivators such as MAML1 to form an intermediate preactivation complex which associates with DNA-bound CBF-1/RBPJ to form a transcriptional activation complex by releasing SNW1 and redundant NOTCH1 NICD. This is SNW domain-containing protein 1 (SNW1) from Pongo abelii (Sumatran orangutan).